We begin with the raw amino-acid sequence, 659 residues long: Pentatricopeptide repeat-containing protein At3g48810 (659 aa).

16 PPR repeats span residues 75 to 109 (TPLTFEVMIRKLAMDGQVDSVQYLLQQMKLQGFHC), 110 to 144 (SEDLFISVISVYRQVGLAERAVEMFYRIKEFGCDP), 145 to 179 (SVKIYNHVLDTLLGENRIQMIYMVYRDMKRDGFEP), 180 to 214 (NVFTYNVLLKALCKNNKVDGAKKLLVEMSNKGCCP), 215 to 243 (DAVSYTTVISSMCEVGLVKEGRELAERFE), 245 to 279 (VVSVYNALINGLCKEHDYKGAFELMREMVEKGISP), 280 to 314 (NVISYSTLINVLCNSGQIELAFSFLTQMLKRGCHP), 315 to 350 (NIYTLSSLVKGCFLRGTTFDALDLWNQMIRGFGLQP), 351 to 385 (NVVAYNTLVQGFCSHGNIVKAVSVFSHMEEIGCSP), 386 to 420 (NIRTYGSLINGFAKRGSLDGAVYIWNKMLTSGCCP), 421 to 455 (NVVVYTNMVEALCRHSKFKEAESLIEIMSKENCAP), 456 to 490 (SVPTFNAFIKGLCDAGRLDWAEKVFRQMEQQHRCP), 492 to 526 (NIVTYNELLDGLAKANRIEEAYGLTREIFMRGVEW), 527 to 561 (SSSTYNTLLHGSCNAGLPGIALQLVGKMMVDGKSP), 562 to 598 (DEITMNMIILAYCKQGKAERAAQMLDLVSCGRRKWRP), and 599 to 633 (DVISYTNVIWGLCRSNCREDGVILLERMISAGIVP).

Belongs to the PPR family. P subfamily.

The chain is Pentatricopeptide repeat-containing protein At3g48810 from Arabidopsis thaliana (Mouse-ear cress).